Consider the following 185-residue polypeptide: Coiled-coil domain-containing protein 32 (185 aa).

A coiled-coil region spans residues 78 to 98 (LASLEKKLRRIKGLNQEVTSK). The disordered stretch occupies residues 159–185 (IPPESQVEKPVAEDEPAAGDKPAAAEQ).

Interacts with AP2S1; the interaction is direct and mediates association with adaptor protein complex 2 (AP-2).

The protein resides in the membrane. The protein localises to the coated pit. Its function is as follows. Regulates clathrin-mediated endocytsois of cargos such as transferrin probably through the association and modulation of adaptor protein complex 2 (AP-2). Has a role in ciliogenesis. Required for proper cephalic and left/right axis development. The sequence is that of Coiled-coil domain-containing protein 32 from Homo sapiens (Human).